An 858-amino-acid polypeptide reads, in one-letter code: Ubiquitin carboxyl-terminal hydrolase 5 (858 aa).

N-acetylalanine is present on Ala2. Residues Arg74–Pro96 form a disordered region. A Glycyl lysine isopeptide (Lys-Gly) (interchain with G-Cter in SUMO) cross-link involves residue Lys113. Phosphoserine is present on residues Ser149 and Ser156. A UBP-type; degenerate zinc finger spans residues Gln175–Met283. Cysteines 195 and 816 form a disulfide. Cys199 and Cys202 together coordinate Zn(2+). Trp209 contacts substrate. Cys219 contributes to the Zn(2+) binding site. Position 221 to 224 (Arg221 to Phe224) interacts with substrate. Position 232 (His232) interacts with Zn(2+). Tyr259, Tyr261, and Asp264 together coordinate substrate. At Thr292 the chain carries Phosphothreonine. The USP domain maps to Thr326 to Val856. Residue Cys335 is the Nucleophile of the active site. Thr623 is modified (phosphothreonine). UBA domains follow at residues Met654 to His695 and Pro722 to His762. Ser779, Ser783, and Ser785 each carry phosphoserine. The active-site Proton acceptor is the His818.

Belongs to the peptidase C19 family. Homodimer. Interacts with TRIML1. In terms of processing, ubiquitinated by SMURF1; leading to proteasomal degradation. SUMOylated at Lys-113; SUMOylation affects the interaction with Cav3.2 channels.

It localises to the cytoplasm. It is found in the stress granule. The protein localises to the nucleus. It carries out the reaction Thiol-dependent hydrolysis of ester, thioester, amide, peptide and isopeptide bonds formed by the C-terminal Gly of ubiquitin (a 76-residue protein attached to proteins as an intracellular targeting signal).. Deubiquitinating enzyme that participates in a wide range of cellular processes by specifically cleaving isopeptide bonds between ubiquitin and substrate proteins or ubiquitin itself. Affects thereby important cellular signaling pathways such as NF-kappa-B, Wnt/beta-catenin, and cytokine production by regulating ubiquitin-dependent protein degradation. Participates in the activation of the Wnt signaling pathway by promoting FOXM1 deubiquitination and stabilization that induces the recruitment of beta-catenin to Wnt target gene promoter. Regulates the assembly and disassembly of heat-induced stress granules by mediating the hydrolysis of unanchored ubiquitin chains. Promotes lipopolysaccharide-induced apoptosis and inflammatory response by stabilizing the TXNIP protein. Affects T-cell biology by stabilizing the inhibitory receptor on T-cells PDC1. Acts as a negative regulator of autophagy by regulating ULK1 at both protein and mRNA levels. Acts also as a negative regulator of type I interferon production by simultaneously removing both 'Lys-48'-linked unanchored and 'Lys-63'-linked anchored polyubiquitin chains on the transcription factor IRF3. Modulates the stability of DNA mismatch repair protein MLH1 and counteracts the effect of the ubiquitin ligase UBR4. Upon activation by insulin, it gets phosphorylated through mTORC1-mediated phosphorylation to enhance YTHDF1 stability by removing 'Lys-11'-linked polyubiquitination. May also deubiquitinate other substrates such as the calcium channel CACNA1H. This Pongo abelii (Sumatran orangutan) protein is Ubiquitin carboxyl-terminal hydrolase 5 (UBP5).